The primary structure comprises 345 residues: UDP-N-acetylenolpyruvoylglucosamine reductase (345 aa).

Residues leucine 16–glutamate 186 form the FAD-binding PCMH-type domain. The active site involves arginine 162. Serine 232 acts as the Proton donor in catalysis. Residue glutamate 328 is part of the active site.

Belongs to the MurB family. FAD is required as a cofactor.

Its subcellular location is the cytoplasm. It catalyses the reaction UDP-N-acetyl-alpha-D-muramate + NADP(+) = UDP-N-acetyl-3-O-(1-carboxyvinyl)-alpha-D-glucosamine + NADPH + H(+). The protein operates within cell wall biogenesis; peptidoglycan biosynthesis. Functionally, cell wall formation. The protein is UDP-N-acetylenolpyruvoylglucosamine reductase of Pectobacterium atrosepticum (strain SCRI 1043 / ATCC BAA-672) (Erwinia carotovora subsp. atroseptica).